Reading from the N-terminus, the 517-residue chain is MAMALALRRLSSSADKPLQRLFNGGHLYSMSSLPSEAVYEKERPGVTWPKQLNAPLEVVDPEIADIIELEKARQWKGLELIPSENFTSLSVMQAVGSVMTNKYSEGYPGARYYGGNEYIDMAETLCQKRALEAFRLDPAKWGVNVQPLSGSPANFHVYTALLKAHDRIMALDLPHGGHLSHGYQTDTKKISAVSIFFETMPYRLNESTGYIDYDQLEKSATLFRPKLIVAGASAYARLYDYARIRKVCDKQKAIMLADMAHISGLVAAGVIPSPFDYADVVTTTTHKSLRGPRGAMIFFRKGLKEVNKQGKEVFYDYEDKINQAVFPGLQGGPHNHTITGLAVALKQATTAEYKAYQEQVMSNSAKFAETLVKSGYELVSGGTENHLVLVNLKNKGIDGSKVEKVLEAVHIAANKNTVPGDVSAMVPGGIRMGTPALTSRGFVEEDFAKVAYFFDLAVKLAVKIKGEAKGTKLKDFVTAMESSAIQSEISKLRHDVEEYAKQFPTIGFEKETMKYKN.

Residues 1–31 constitute a mitochondrion transit peptide; it reads MAMALALRRLSSSADKPLQRLFNGGHLYSMS. N6-(pyridoxal phosphate)lysine is present on Lys287.

It belongs to the SHMT family. Homotetramer. Pyridoxal 5'-phosphate is required as a cofactor.

The protein localises to the mitochondrion. The catalysed reaction is (6R)-5,10-methylene-5,6,7,8-tetrahydrofolate + glycine + H2O = (6S)-5,6,7,8-tetrahydrofolate + L-serine. The protein operates within one-carbon metabolism; tetrahydrofolate interconversion. Its function is as follows. Catalyzes the interconversion of serine and glycine. The sequence is that of Serine hydroxymethyltransferase 1, mitochondrial from Flaveria pringlei.